The primary structure comprises 855 residues: Leucine--tRNA ligase (855 aa).

Positions 42–52 (PYPSGSLHVGH) match the 'HIGH' region motif. Residues 292 to 311 (SEMDRTAEDKPKKGIPTGGK) form a disordered region. The span at 293-303 (EMDRTAEDKPK) shows a compositional bias: basic and acidic residues. Residues 614-618 (KMSKS) carry the 'KMSKS' region motif. Lys617 serves as a coordination point for ATP.

This sequence belongs to the class-I aminoacyl-tRNA synthetase family.

The protein localises to the cytoplasm. It catalyses the reaction tRNA(Leu) + L-leucine + ATP = L-leucyl-tRNA(Leu) + AMP + diphosphate. The sequence is that of Leucine--tRNA ligase from Acaryochloris marina (strain MBIC 11017).